The following is a 773-amino-acid chain: 4'-phosphopantetheine phosphatase (773 aa).

Ala-2 is modified (N-acetylalanine). Positions Ala-2–Ala-402 are pantothenate kinase. Positions 196 and 199 each coordinate acetyl-CoA. Tyr-320 bears the 3'-nitrotyrosine mark. A phosphoserine mark is found at Ser-393 and Ser-404. The interval Arg-403 to Glu-773 is 4'-phosphopantetheine phosphatase. Thr-406 carries the phosphothreonine modification. Mn(2+) is bound by residues Asp-623, Asn-624, and Asp-659. A Subfamily II EGMGR motif motif is present at residues Glu-724 to Arg-728.

In the N-terminal section; belongs to the type II pantothenate kinase family. It in the C-terminal section; belongs to the damage-control phosphatase family. Phosphopantetheine phosphatase II subfamily. As to quaternary structure, homodimer. Interacts with PKM. It depends on Mn(2+) as a cofactor. Ni(2+) serves as cofactor. Widely expressed with high expression in the muscle. Expressed in the retina and lens epithelium, mainly in ganglion cell layer, outer plexiform layer and retinal pigment layer (at protein level).

The protein localises to the cytoplasm. It carries out the reaction (R)-4'-phosphopantetheine + H2O = (R)-pantetheine + phosphate. It catalyses the reaction (R)-4'-phosphopantetheine sulfonate + H2O = (R)-pantetheine sulfonate + phosphate. The enzyme catalyses (R)-4'-phospho-S-sulfopantetheine + H2O = (R)-S-sulfopantetheine + phosphate. With respect to regulation, activity is strongly promoted by Co(2+), Ni(2+), Mg(2+) and Mn(2+). Activity is inhibited by EDTA. Phosphatase which shows a preference for 4'-phosphopantetheine and its oxidatively damaged forms (sulfonate or S-sulfonate), providing strong indirect evidence that the phosphatase activity pre-empts damage in the coenzyme A (CoA) pathway. Hydrolyzing excess 4'-phosphopantetheine could constitute a directed overflow mechanism to prevent its oxidation to the S-sulfonate, sulfonate, or other forms. Hydrolyzing 4'-phosphopantetheine sulfonate or S-sulfonate would forestall their conversion to inactive forms of CoA and acyl carrier protein. May play a role in the physiological regulation of CoA intracellular levels. The sequence is that of 4'-phosphopantetheine phosphatase from Homo sapiens (Human).